Here is a 427-residue protein sequence, read N- to C-terminus: Glutamate-1-semialdehyde 2,1-aminomutase 2 (427 aa).

Lys267 bears the N6-(pyridoxal phosphate)lysine mark.

This sequence belongs to the class-III pyridoxal-phosphate-dependent aminotransferase family. HemL subfamily. As to quaternary structure, homodimer. Pyridoxal 5'-phosphate is required as a cofactor.

It is found in the cytoplasm. It catalyses the reaction (S)-4-amino-5-oxopentanoate = 5-aminolevulinate. It participates in porphyrin-containing compound metabolism; protoporphyrin-IX biosynthesis; 5-aminolevulinate from L-glutamyl-tRNA(Glu): step 2/2. In Staphylococcus haemolyticus (strain JCSC1435), this protein is Glutamate-1-semialdehyde 2,1-aminomutase 2.